We begin with the raw amino-acid sequence, 371 residues long: Deoxyhypusine synthase (371 aa).

NAD(+) contacts are provided by residues 112 to 116 (SNLVT), 138 to 140 (SAG), Glu144, and Asp245. 143 to 144 (EE) serves as a coordination point for spermidine. Asp250 provides a ligand contact to spermidine. Gly291 provides a ligand contact to NAD(+). His296 is a spermidine binding site. NAD(+) is bound at residue 316-317 (TG). Spermidine is bound by residues 322-324 (GSD) and 331-337 (EAVSWGK). Residue Lys337 is the Nucleophile of the active site. 350 to 351 (EA) serves as a coordination point for NAD(+).

The protein belongs to the deoxyhypusine synthase family. The cofactor is NAD(+).

The enzyme catalyses [eIF5A protein]-L-lysine + spermidine = [eIF5A protein]-deoxyhypusine + propane-1,3-diamine. Its pathway is protein modification; eIF5A hypusination. Catalyzes the NAD-dependent oxidative cleavage of spermidine and the subsequent transfer of the butylamine moiety of spermidine to the epsilon-amino group of a critical lysine residue of the eIF-5A precursor protein to form the intermediate deoxyhypusine residue. This is the first step of the post-translational modification of that lysine into an unusual amino acid residue named hypusine. Hypusination is unique to mature eIF-5A factor and is essential for its function. This is Deoxyhypusine synthase from Caenorhabditis elegans.